Reading from the N-terminus, the 473-residue chain is Mogroside IIIx synthase (473 aa).

His21 functions as the Proton acceptor in the catalytic mechanism. Asp123 (charge relay) is an active-site residue. The UDP-alpha-D-glucose site is built by Thr274, Gln337, Trp355, Asn356, Ser357, Glu360, Asp376, and Gln377.

It belongs to the UDP-glycosyltransferase family. As to expression, highly expressed in mature fruits.

It carries out the reaction mogroside IIE + UDP-alpha-D-glucose = mogroside IIIX + UDP + H(+). It catalyses the reaction mogroside III + UDP-alpha-D-glucose = siamenoside I + UDP + H(+). The protein operates within secondary metabolite biosynthesis; terpenoid biosynthesis. Its function is as follows. UDP-glycosyltransferase involved in the biosynthesis of cucurbitacin and mogroside tetracyclic triterpene natural products (e.g. siamenoside I and mogrosides IV, V and VI). Cucurbitacins have cytotoxic properties and exhibit deterrent taste as a defense barrier against herbivores. Mogrosides are nonsugar highly oxygenated compounds used as high-intensity zero-calorie sweeteners; they also possess pharmacological properties such as regulating immunity, lowering blood sugar and lipid levels, protecting the liver, and acting as antioxidants and antitumor agents. Catalyzes the branched glucosylations of mogroside II-E and mogroside III. The sequence is that of Mogroside IIIx synthase from Siraitia grosvenorii (Monk's fruit).